The following is a 682-amino-acid chain: Polyadenylate-binding protein 5 (682 aa).

RRM domains lie at 59 to 136, 146 to 223, 239 to 316, and 342 to 419; these read SSLY…LSNR, GNVF…HFVR, TNVY…RAQK, and SNLY…LAQR. Positions 588–665 constitute a PABC domain; it reads TISKLASDLA…ALDVLRRSAD (78 aa). S600 is modified (phosphoserine).

The protein belongs to the polyadenylate-binding protein type-1 family. As to expression, expressed predominantly in immature flowers but also at lower levels in mature flowers and siliques. Detected in tapetum, pollen, ovules and developing seeds. Also detected in primary inflorescences and immature siliques.

The protein resides in the cytoplasm. It is found in the nucleus. Its function is as follows. Binds the poly(A) tail of mRNA. Appears to be an important mediator of the multiple roles of the poly(A) tail in mRNA biogenesis, stability and translation. The polypeptide is Polyadenylate-binding protein 5 (PAB5) (Arabidopsis thaliana (Mouse-ear cress)).